Reading from the N-terminus, the 177-residue chain is MLWRLVQQWSVAVFLLSYSVPSCGRSVEELGRRLKRAVSEHQLLHDKGKSIQDLRRRFFLHHLIAEIHTAEIRATSEVSPNSKPAPNTKNHPVRFGSDDEGKYLTQETNKVETYKEQPLKTPGKKKKSKPGKRKEQEKKKRRTRSAWLTSYVAGTGLEEDYLSDISATSLELNSRRH.

A signal peptide spans Met-1–Gly-24. The propeptide occupies Arg-25 to Leu-34. The interval Arg-57–His-68 is important for receptor binding. A disordered region spans residues Ala-74–Thr-149. The segment covering Ser-76–Asn-90 has biased composition (polar residues). A Nuclear localization signal motif is present at residues Thr-108–Lys-129. Basic and acidic residues predominate over residues Asn-109–Pro-118. Residues Pro-122–Lys-132 are compositionally biased toward basic residues.

It belongs to the parathyroid hormone family. As to quaternary structure, PTHrP interacts with PTH1R (via N-terminal extracellular domain). Post-translationally, there are several secretory forms, including osteostatin, arising from endoproteolytic cleavage of the initial translation product. Each of these secretory forms is believed to have one or more of its own receptors that mediates the normal paracrine, autocrine and endocrine actions.

The protein localises to the secreted. It localises to the cytoplasm. Its subcellular location is the nucleus. In terms of biological role, neuroendocrine peptide which is a critical regulator of cellular and organ growth, development, migration, differentiation and survival and of epithelial calcium ion transport. Acts by binding to its receptor, PTH1R, activating G protein-coupled receptor signaling. Regulates endochondral bone development and epithelial-mesenchymal interactions during the formation of the mammary glands and teeth. Required for skeletal homeostasis. Promotes mammary mesenchyme differentiation and bud outgrowth by modulating mesenchymal cell responsiveness to BMPs. Up-regulates BMPR1A expression in the mammary mesenchyme and this increases the sensitivity of these cells to BMPs and allows them to respond to BMP4 in a paracrine and/or autocrine fashion. BMP4 signaling in the mesenchyme, in turn, triggers epithelial outgrowth and augments MSX2 expression, which causes the mammary mesenchyme to inhibit hair follicle formation within the nipple sheath. Potent inhibitor of osteoclastic bone resorption. The sequence is that of Parathyroid hormone-related protein (PTHLH) from Bos taurus (Bovine).